The chain runs to 283 residues: 2,3,4,5-tetrahydropyridine-2,6-dicarboxylate N-succinyltransferase (283 aa).

Positions 107 and 144 each coordinate substrate.

This sequence belongs to the transferase hexapeptide repeat family. As to quaternary structure, homotrimer.

It localises to the cytoplasm. It carries out the reaction (S)-2,3,4,5-tetrahydrodipicolinate + succinyl-CoA + H2O = (S)-2-succinylamino-6-oxoheptanedioate + CoA. The protein operates within amino-acid biosynthesis; L-lysine biosynthesis via DAP pathway; LL-2,6-diaminopimelate from (S)-tetrahydrodipicolinate (succinylase route): step 1/3. The sequence is that of 2,3,4,5-tetrahydropyridine-2,6-dicarboxylate N-succinyltransferase from Rhodospirillum rubrum (strain ATCC 11170 / ATH 1.1.1 / DSM 467 / LMG 4362 / NCIMB 8255 / S1).